The primary structure comprises 640 residues: ESX-3 secretion system protein EccA3 (640 aa).

393–400 (GPPGTGKT) contacts ATP.

It belongs to the CbxX/CfxQ family. In terms of assembly, part of the ESX-3 / type VII secretion system (T7SS), which is composed of cytosolic and membrane components.

It localises to the cytoplasm. Functionally, part of an ESX-3 / type VII specialized secretion system (T7SS), which exports several proteins. EccA3 exhibits ATPase activity and may provide energy for the export of ESX-3 substrates. This chain is ESX-3 secretion system protein EccA3, found in Mycobacterium leprae (strain TN).